We begin with the raw amino-acid sequence, 337 residues long: Tryptophan--tRNA ligase (337 aa).

ATP contacts are provided by residues 11-13 (QPT) and 19-20 (GN). Residues 12–20 (PTGALHLGN) carry the 'HIGH' region motif. Asp135 lines the L-tryptophan pocket. ATP contacts are provided by residues 147-149 (GED), Val191, and 200-204 (KMSKS). The 'KMSKS' region motif lies at 200–204 (KMSKS).

Belongs to the class-I aminoacyl-tRNA synthetase family. As to quaternary structure, homodimer.

The protein localises to the cytoplasm. It carries out the reaction tRNA(Trp) + L-tryptophan + ATP = L-tryptophyl-tRNA(Trp) + AMP + diphosphate + H(+). In terms of biological role, catalyzes the attachment of tryptophan to tRNA(Trp). This chain is Tryptophan--tRNA ligase, found in Prochlorococcus marinus (strain MIT 9313).